Here is a 441-residue protein sequence, read N- to C-terminus: Baicalein 7-O-glucuronosyltransferase (441 aa).

This sequence belongs to the UDP-glycosyltransferase family. As to quaternary structure, homodimer.

It catalyses the reaction baicalein + UDP-alpha-D-glucuronate = baicalin + UDP. With respect to regulation, inhibited by copper, zinc and iron, p-Chloromercuri-benzoic acid (PCMBA) and 4,4'-diisothiocyanostilbene-2,2'-disulfonic acid (DIDS), but not by N-ethylmaleimide (NEM), dithioerythritol (DTE), calcium or magnesium. In terms of biological role, involved in the production of glucuronosylated baicalein, a flavonoid that shows antiallergic, anti-HIV and antitumor activities. Can use baicalein, scutellarein and wogonin as substrates, but not chrysin, apigenin, luteolin, quercetin, formononetin and daidzein. Highly specific for UDP-glucuronate (UDP-GlcUA) and no activity with UDP-glucose or UDP-galacturonic acid. This Scutellaria baicalensis (Baical skullcap) protein is Baicalein 7-O-glucuronosyltransferase (UBGAT-I).